The primary structure comprises 289 residues: Ribosomal RNA small subunit methyltransferase A (289 aa).

S-adenosyl-L-methionine-binding residues include His-27, Leu-29, Gly-54, Glu-76, Asp-102, and Asn-123.

The protein belongs to the class I-like SAM-binding methyltransferase superfamily. rRNA adenine N(6)-methyltransferase family. RsmA subfamily.

Its subcellular location is the cytoplasm. The catalysed reaction is adenosine(1518)/adenosine(1519) in 16S rRNA + 4 S-adenosyl-L-methionine = N(6)-dimethyladenosine(1518)/N(6)-dimethyladenosine(1519) in 16S rRNA + 4 S-adenosyl-L-homocysteine + 4 H(+). Functionally, specifically dimethylates two adjacent adenosines (A1518 and A1519) in the loop of a conserved hairpin near the 3'-end of 16S rRNA in the 30S particle. May play a critical role in biogenesis of 30S subunits. This is Ribosomal RNA small subunit methyltransferase A from Maricaulis maris (strain MCS10) (Caulobacter maris).